The primary structure comprises 444 residues: uncharacterized protein (444 aa).

The Radical SAM core domain occupies 164 to 381 (GAYGKSFLLE…EKALKKEGIR (218 aa)). C178, C182, and C185 together coordinate [4Fe-4S] cluster.

[4Fe-4S] cluster serves as cofactor.

This is an uncharacterized protein from Methanocaldococcus jannaschii (strain ATCC 43067 / DSM 2661 / JAL-1 / JCM 10045 / NBRC 100440) (Methanococcus jannaschii).